Reading from the N-terminus, the 277-residue chain is Protein G1-like2 (277 aa).

A compositionally biased stretch (gly residues) spans 1–16 (MQGGGGGDSSGGGGGE). Disordered stretches follow at residues 1 to 28 (MQGG…SQKR), 141 to 203 (RGIA…GHFF), and 225 to 245 (HQVS…TNTG). The segment covering 19–28 (RPSRYESQKR) has biased composition (basic and acidic residues). The ALOG domain maps to 22-149 (RYESQKRRDW…ARGIAYEKKR (128 aa)). Positions 147–151 (KKRRK) match the Nuclear localization signal motif. Positions 154–177 (PTSSSSSQAAAAAAAATSPASPAA) are enriched in low complexity. Residues 178 to 187 (SPTPPPPPPT) are compositionally biased toward pro residues.

It belongs to the plant homeotic and developmental regulators ALOG protein family.

It localises to the nucleus. Its function is as follows. Probable transcription regulator that acts as a developmental regulator by promoting cell growth in response to light. This is Protein G1-like2 (G1L2) from Oryza sativa subsp. japonica (Rice).